Reading from the N-terminus, the 65-residue chain is MFLSAVTFAKSKSKTILVKMVSQAGTGFSFNTKRSRLWEKLTLLHYDPVVKKKVLFVEQKKIRSL.

The N-terminal 8 residues, 1 to 8 (MFLSAVTF), are a transit peptide targeting the mitochondrion.

Belongs to the bacterial ribosomal protein bL33 family. As to quaternary structure, component of the mitochondrial ribosome large subunit (39S) which comprises a 16S rRNA and about 50 distinct proteins.

The protein resides in the mitochondrion. The polypeptide is Large ribosomal subunit protein bL33m (MRPL33) (Bos taurus (Bovine)).